The chain runs to 235 residues: Protein FAM3B (235 aa).

Positions 1–29 (MRPLAGGLLKVVFVVFASLCAWYSGYLLA) are cleaved as a signal peptide. Disulfide bonds link Cys63–Cys91 and Cys69–Cys229. The GG-type lectin domain occupies 72 to 233 (DTYAYRLLSG…IQIEGCIPKE (162 aa)). 2 N-linked (GlcNAc...) asparagine glycosylation sites follow: Asn120 and Asn208.

This sequence belongs to the FAM3 family. Post-translationally, 2 N-termini have been observed in the mature protein: the first at Glu-30, resulting from signal peptide cleavage, the second at Ser-46. In terms of processing, O-glycosylated. As to expression, highly expressed in the pancreas. Also found in the colon, kidney, prostate, small intestine and testis.

The protein resides in the secreted. Functionally, induces apoptosis of alpha and beta cells in a dose- and time-dependent manner. This chain is Protein FAM3B (FAM3B), found in Homo sapiens (Human).